We begin with the raw amino-acid sequence, 318 residues long: Cobalamin biosynthesis protein CobD (318 aa).

The next 5 membrane-spanning stretches (helical) occupy residues valine 56–methionine 76, glutamate 78–glycine 98, valine 153–alanine 173, leucine 204–isoleucine 224, and methionine 298–isoleucine 318.

The protein belongs to the CobD/CbiB family.

The protein resides in the cell membrane. The protein operates within cofactor biosynthesis; adenosylcobalamin biosynthesis. In terms of biological role, converts cobyric acid to cobinamide by the addition of aminopropanol on the F carboxylic group. This is Cobalamin biosynthesis protein CobD from Yersinia enterocolitica serotype O:8 / biotype 1B (strain NCTC 13174 / 8081).